The chain runs to 185 residues: uncharacterized protein (185 aa).

This is an uncharacterized protein from Trypanosoma brucei brucei.